Reading from the N-terminus, the 418-residue chain is MIFDKDDFKAYDADLWNAIAKEEERQQNNIELIASENVVSKAVMAAQGSILTNKYAEGYPGRRYYGGTDVVDVVETLAIERAKEIFGAKFANVQPHSGSQANCAAYISLIEPGDTVMGMDLASGGHLTHGAPVSFSGQTYNFVSYSVDPETELLDFDAILKQAQEVKPKLIVAGASAYSQIIDFSKFREIADAVGAKLMVDMAHIAGLVAAGLHPSPVPYAHITTTTTHKTLRGPRGGLILTNDEELAKKINSAIFPGIQGGPLEHVVAAKAVSFKEVLDPAFKEYAANVIKNSKAMADVFLQDPDFRIISGGTENHLFLVDVTKVVENGKVAQNLLDEVNITLNKNSIPYETLSPFKTSGIRIGAAAITARGFGEEESRKVAELIIKTLKNSENEAVLEEVRSAVKELTDAFPLYEE.

(6S)-5,6,7,8-tetrahydrofolate contacts are provided by residues L121 and 125–127; that span reads GHL. An N6-(pyridoxal phosphate)lysine modification is found at K230. Residues E246 and 355–357 each bind (6S)-5,6,7,8-tetrahydrofolate; that span reads SPF.

Belongs to the SHMT family. As to quaternary structure, homodimer. Pyridoxal 5'-phosphate is required as a cofactor.

The protein localises to the cytoplasm. It catalyses the reaction (6R)-5,10-methylene-5,6,7,8-tetrahydrofolate + glycine + H2O = (6S)-5,6,7,8-tetrahydrofolate + L-serine. Its pathway is one-carbon metabolism; tetrahydrofolate interconversion. It functions in the pathway amino-acid biosynthesis; glycine biosynthesis; glycine from L-serine: step 1/1. Its function is as follows. Catalyzes the reversible interconversion of serine and glycine with tetrahydrofolate (THF) serving as the one-carbon carrier. This reaction serves as the major source of one-carbon groups required for the biosynthesis of purines, thymidylate, methionine, and other important biomolecules. Also exhibits THF-independent aldolase activity toward beta-hydroxyamino acids, producing glycine and aldehydes, via a retro-aldol mechanism. The sequence is that of Serine hydroxymethyltransferase from Streptococcus pneumoniae (strain Hungary19A-6).